The chain runs to 348 residues: Lipopolysaccharide heptosyltransferase 2 (348 aa).

The protein belongs to the glycosyltransferase 9 family.

The enzyme catalyses an L-alpha-D-Hep-(1-&gt;5)-[alpha-Kdo-(2-&gt;4)]-alpha-Kdo-(2-&gt;6)-lipid A + ADP-L-glycero-beta-D-manno-heptose = an L-alpha-D-Hep-(1-&gt;3)-L-alpha-D-Hep-(1-&gt;5)-[alpha-Kdo-(2-&gt;4)]-alpha-Kdo-(2-&gt;6)-lipid A + ADP + H(+). Its pathway is bacterial outer membrane biogenesis; LPS core biosynthesis. Glycosyltransferase involved in the biosynthesis of the core oligosaccharide region of lipopolysaccharide (LPS). Catalyzes the addition of the second heptose unit to the heptosyl-Kdo2-lipid A module. This is Lipopolysaccharide heptosyltransferase 2 from Salmonella typhimurium (strain LT2 / SGSC1412 / ATCC 700720).